The sequence spans 294 residues: Acetaldehyde dehydrogenase (294 aa).

Position 11–14 (11–14 (SGNI)) interacts with NAD(+). The Acyl-thioester intermediate role is filled by cysteine 126. NAD(+) contacts are provided by residues 157–165 (SAGPGTRAN) and asparagine 269.

This sequence belongs to the acetaldehyde dehydrogenase family.

It carries out the reaction acetaldehyde + NAD(+) + CoA = acetyl-CoA + NADH + H(+). This chain is Acetaldehyde dehydrogenase (pheF), found in Geobacillus stearothermophilus (Bacillus stearothermophilus).